A 506-amino-acid polypeptide reads, in one-letter code: Methylthioalkylmalate synthase 1, chloroplastic (506 aa).

The transit peptide at 1–49 directs the protein to the chloroplast; sequence MASSLLTSSVMIPTTGSTVVGRSVLPFQSSLHSLRLTHSYKNPALFISC. One can recognise a Pyruvate carboxyltransferase domain in the interval 85–359; it reads VRVFDTTLRD…YTKIDTRQIM (275 aa). Residue Ser98 is modified to Phosphoserine.

Belongs to the alpha-IPM synthase/homocitrate synthase family. In terms of assembly, monomer. Mn(2+) is required as a cofactor. In terms of tissue distribution, highly expressed in leaves, flowers, roots and siliques. Not detected in flowers in PubMed:12432038.

It is found in the plastid. The protein resides in the chloroplast. The enzyme catalyses an omega-(methylsulfanyl)-2-oxoalkanoate + acetyl-CoA + H2O = a 2-(omega-methylsulfanyl)alkylmalate + CoA + H(+). Its activity is regulated as follows. 1 mM DTT required for activity. Activated by ATP and inhibited by iodoacetamide. Determines the side chain length of aliphatic glucosinolate structures. Catalyzes exclusively the condensation reactions of both the first and second methionine carbon chain elongation. This is Methylthioalkylmalate synthase 1, chloroplastic (MAM1) from Arabidopsis thaliana (Mouse-ear cress).